A 415-amino-acid polypeptide reads, in one-letter code: Putative F-box/FBD/LRR-repeat protein At3g49040 (415 aa).

An F-box domain is found at 10–58 (EDRISELHEALLVHIMSSLPTKTVVATSVLSKRWRHVWKTVQNLKFVSK). 5 LRR repeats span residues 60-86 (HQTFSEDVYRFFMLHKAPFLESLDLEF), 87-114 (SNQLDASDLGILVGIAFARHVRNLVLDL), 143-170 (TLTLKHSILLYFPYRVCLKSLRKLHLYK), 171-196 (VHFYGKDSVYNLLCGCPSLRDLIVHR), and 213-241 (RLTIEDSGFGYGCCYVINAPSLKYLNIRR). The FBD domain occupies 272 to 377 (ILESLTSAKR…TSLKKATFST (106 aa)).

In Arabidopsis thaliana (Mouse-ear cress), this protein is Putative F-box/FBD/LRR-repeat protein At3g49040.